The chain runs to 470 residues: 5-hydroxytryptamine receptor 2A (470 aa).

The Extracellular portion of the chain corresponds to 1 to 80 (MDVLCEENTS…LQEKNWSALL (80 aa)). 6 N-linked (GlcNAc...) asparagine glycosylation sites follow: Asn-8, Asn-38, Asn-44, Asn-51, Asn-54, and Asn-75. The chain crosses the membrane as a helical span at residues 81–97 (TAVVIILTIAGNILVIM). Over 98 to 111 (AVSLEKKLQNATNY) the chain is Cytoplasmic. Residues 112–137 (FLMSLAIADMLLGFLVMPVSMLTILY) form a helical membrane-spanning segment. Residues 138-146 (GYRWPLPSK) are Extracellular-facing. Residues 147 to 171 (LCAVWIYLDVLFSTASIMHLCAISL) traverse the membrane as a helical segment. Cys-148 and Cys-227 are disulfide-bonded. Asp-155 serves as a coordination point for serotonin. The short motif at 172–174 (DRY) is the DRY motif; important for ligand-induced conformation changes element. At 172–191 (DRYVAIQNPIHHRRFNSRTK) the chain is on the cytoplasmic side. The chain crosses the membrane as a helical span at residues 192–215 (AFLKIIAVWTISVGISMPIPVFGL). Over 216 to 232 (QDDSKVFKEGSCLLADD) the chain is Extracellular. A helical transmembrane segment spans residues 233–258 (NFVLIGSFVSFFIPLTIMVITYFLTI). Residues 259-321 (KSLQKEATLC…QSISNEQKAC (63 aa)) are Cytoplasmic-facing. Ser-280 carries the post-translational modification Phosphoserine. Residues 322–347 (KVLGIVFFLFVVMWCPFFITNIMAVI) form a helical membrane-spanning segment. A serotonin-binding site is contributed by Asn-342. A disulfide bridge connects residues Cys-348 and Cys-352. Topologically, residues 348 to 355 (CKESCNED) are extracellular. The chain crosses the membrane as a helical span at residues 356-381 (VIGALLNVFVWIGYLSSAVNPLVYTL). The NPxxY motif; important for ligand-induced conformation changes and signaling signature appears at 375-379 (NPLVY). Topologically, residues 382–470 (FNKTYRSAFS…NTVNEKVSCV (89 aa)) are cytoplasmic. A disordered region spans residues 448–470 (GKQHSEDAPADNSNTVNEKVSCV). The span at 458–470 (DNSNTVNEKVSCV) shows a compositional bias: polar residues. The short motif at 468 to 470 (SCV) is the PDZ-binding element.

The protein belongs to the G-protein coupled receptor 1 family. As to quaternary structure, interacts (via C-terminus) with MPDZ and PATJ. May interact (via C-terminus) with MPP3, PRDX6, DLG4, DLG1, CASK, APBA1 and MAGI2. Interacts with GRM2 and DRD2; this may affect signaling.

It localises to the cell membrane. The protein resides in the cell projection. Its subcellular location is the dendrite. It is found in the axon. The protein localises to the cytoplasmic vesicle. It localises to the membrane. The protein resides in the caveola. Its subcellular location is the presynapse. G-protein coupled receptor activity is regulated by lipids: oleamide increases HTR2A-mediated activity. Functionally, G-protein coupled receptor for 5-hydroxytryptamine (serotonin). Also functions as a receptor for various drugs and psychoactive substances, including mescaline, psilocybin, 1-(2,5-dimethoxy-4-iodophenyl)-2-aminopropane (DOI) and lysergic acid diethylamide (LSD). Ligand binding causes a conformation change that triggers signaling via guanine nucleotide-binding proteins (G proteins) and modulates the activity of downstream effectors. HTR2A is coupled to G(q)/G(11) G alpha proteins and activates phospholipase C-beta, releasing diacylglycerol (DAG) and inositol 1,4,5-trisphosphate (IP3) second messengers that modulate the activity of phosphatidylinositol 3-kinase and promote the release of Ca(2+) ions from intracellular stores, respectively. Beta-arrestin family members inhibit signaling via G proteins and mediate activation of alternative signaling pathways. Affects neural activity, perception, cognition and mood. Plays a role in the regulation of behavior, including responses to anxiogenic situations and psychoactive substances. Plays a role in intestinal smooth muscle contraction, and may play a role in arterial vasoconstriction. In Sus scrofa (Pig), this protein is 5-hydroxytryptamine receptor 2A (HTR2A).